The primary structure comprises 230 residues: Ribose-5-phosphate isomerase A (230 aa).

Substrate is bound by residues 32 to 35, 85 to 88, and 98 to 101; these read TGST, DGAD, and KGGG. Glu107 functions as the Proton acceptor in the catalytic mechanism. Lys125 serves as a coordination point for substrate.

The protein belongs to the ribose 5-phosphate isomerase family. As to quaternary structure, homodimer.

It catalyses the reaction aldehydo-D-ribose 5-phosphate = D-ribulose 5-phosphate. It participates in carbohydrate degradation; pentose phosphate pathway; D-ribose 5-phosphate from D-ribulose 5-phosphate (non-oxidative stage): step 1/1. Functionally, catalyzes the reversible conversion of ribose-5-phosphate to ribulose 5-phosphate. The protein is Ribose-5-phosphate isomerase A of Burkholderia ambifaria (strain ATCC BAA-244 / DSM 16087 / CCUG 44356 / LMG 19182 / AMMD) (Burkholderia cepacia (strain AMMD)).